A 382-amino-acid polypeptide reads, in one-letter code: Ribosomal RNA large subunit methyltransferase G (382 aa).

It belongs to the methyltransferase superfamily. RlmG family.

It localises to the cytoplasm. The catalysed reaction is guanosine(1835) in 23S rRNA + S-adenosyl-L-methionine = N(2)-methylguanosine(1835) in 23S rRNA + S-adenosyl-L-homocysteine + H(+). Functionally, specifically methylates the guanine in position 1835 (m2G1835) of 23S rRNA. In Aliivibrio salmonicida (strain LFI1238) (Vibrio salmonicida (strain LFI1238)), this protein is Ribosomal RNA large subunit methyltransferase G.